A 290-amino-acid chain; its full sequence is Nucleoid occlusion protein (290 aa).

A DNA-binding region (H-T-H motif) is located at residues 153–172 (EALAQRLGKGQSTVANKLRL).

This sequence belongs to the ParB family.

It localises to the cytoplasm. The protein localises to the nucleoid. In terms of biological role, effects nucleoid occlusion by binding relatively nonspecifically to DNA and preventing the assembly of the division machinery in the vicinity of the nucleoid, especially under conditions that disturb the cell cycle. It helps to coordinate cell division and chromosome segregation by preventing the formation of the Z ring through the nucleoid, which would cause chromosome breakage. This is Nucleoid occlusion protein from Bacillus mycoides (strain KBAB4) (Bacillus weihenstephanensis).